Reading from the N-terminus, the 146-residue chain is Hemoglobin subunit beta (146 aa).

Residue Val1 is modified to N-acetylvaline. One can recognise a Globin domain in the interval 2-146 (HLTADEKAAV…VATALAHKYH (145 aa)). Thr12 carries the post-translational modification Phosphothreonine. Phosphoserine is present on Ser44. Residue Lys59 is modified to N6-acetyllysine. Position 63 (His63) interacts with heme b. N6-acetyllysine is present on Lys82. Position 92 (His92) interacts with heme b. Position 93 is an S-nitrosocysteine (Cys93). Lys144 carries the N6-acetyllysine modification.

It belongs to the globin family. Heterotetramer of two alpha chains and two beta chains. In terms of tissue distribution, red blood cells.

Functionally, involved in oxygen transport from the lung to the various peripheral tissues. The sequence is that of Hemoglobin subunit beta (HBB) from Taphozous georgianus (Sharp-nosed tomb bat).